The sequence spans 617 residues: 1-deoxy-D-xylulose-5-phosphate synthase (617 aa).

Thiamine diphosphate contacts are provided by residues histidine 80 and 121 to 123 (GHS). Aspartate 152 is a binding site for Mg(2+). Residues 153–154 (GA), asparagine 181, tyrosine 277, and glutamate 360 contribute to the thiamine diphosphate site. Asparagine 181 is a binding site for Mg(2+).

The protein belongs to the transketolase family. DXPS subfamily. As to quaternary structure, homodimer. It depends on Mg(2+) as a cofactor. The cofactor is thiamine diphosphate.

It catalyses the reaction D-glyceraldehyde 3-phosphate + pyruvate + H(+) = 1-deoxy-D-xylulose 5-phosphate + CO2. It participates in metabolic intermediate biosynthesis; 1-deoxy-D-xylulose 5-phosphate biosynthesis; 1-deoxy-D-xylulose 5-phosphate from D-glyceraldehyde 3-phosphate and pyruvate: step 1/1. In terms of biological role, catalyzes the acyloin condensation reaction between C atoms 2 and 3 of pyruvate and glyceraldehyde 3-phosphate to yield 1-deoxy-D-xylulose-5-phosphate (DXP). The sequence is that of 1-deoxy-D-xylulose-5-phosphate synthase from Blochmanniella floridana.